A 497-amino-acid chain; its full sequence is Ammonium transporter 1 (497 aa).

The Extracellular segment spans residues 1–32 (MSSTTDATPTPSGVNGGDSMTVNLNQFYNNGD). A helical membrane pass occupies residues 33–53 (VAWILTSTALVFIMIPGVGFF). At 54–63 (YSGLARRRSA) the chain is on the cytoplasmic side. The chain crosses the membrane as a helical span at residues 64 to 84 (ISMLFLSMMSVAIVAFQWFFW). The Extracellular portion of the chain corresponds to 85-122 (GYSLTFSHEGGPYIGSLANFGLRQTLGRPSSGASSVPD). A helical membrane pass occupies residues 123 to 143 (ILFCVFQGMFAAITPALAIGA). Over 144–150 (AADRGRM) the chain is Cytoplasmic. Residues 151–171 (FPCMVFMFLWTSIVYDPIAFW) traverse the membrane as a helical segment. The Extracellular segment spans residues 172 to 187 (TWNPNGWLNKLGSYDF). A helical membrane pass occupies residues 188 to 208 (AGGSPVHISSGMAALAYSIVI). Over 209–223 (GKRCDHGTTKYRPHN) the chain is Cytoplasmic. The helical transmembrane segment at 224-244 (VPHVVLGTVFLWFGWFGFNGG) threads the bilayer. The Extracellular portion of the chain corresponds to 245-253 (SSAAANMRG). A helical membrane pass occupies residues 254-274 (VMAVVVTHLAASVGGIVWCVI). Residues 275–281 (DFAKNRH) lie on the Cytoplasmic side of the membrane. A helical membrane pass occupies residues 282–302 (WSVVGFCEGAVAGLVAITPGS). Position 303 (Gly303) is a topological domain, extracellular. Residues 304-324 (FVPPWAAVVIGALGAVFCYAA) form a helical membrane-spanning segment. At 325–338 (TYLKKIIRVDDALD) the chain is on the cytoplasmic side. A helical transmembrane segment spans residues 339–359 (IFAEHGVGGMVGNILTALFAA). Over 360–394 (DYIEALDGSGTAYTGGWITHHYIQLGYQLADTVSC) the chain is Extracellular. Residues 395 to 415 (AAYSFAVSCALLFVMNYIPGL) form a helical membrane-spanning segment. The Cytoplasmic portion of the chain corresponds to 416–497 (SLRVSREDEV…AESEAQAPAI (82 aa)). Positions 440-497 (YKDSTDEPPPITTSGVQYTSPTVSDSASNEKEQEHRAQNEAQKEEEYRAESEAQAPAI) are disordered. Positions 451–466 (TTSGVQYTSPTVSDSA) are enriched in polar residues. The span at 467-490 (SNEKEQEHRAQNEAQKEEEYRAES) shows a compositional bias: basic and acidic residues.

This sequence belongs to the ammonia transporter channel (TC 1.A.11.2) family.

It is found in the membrane. Transporter for ammonium to use as a nitrogen source. Under ammonium limitation acts as an ammonium sensor, generating a signal that leads to pseudohyphal growth. The polypeptide is Ammonium transporter 1 (amt1) (Schizosaccharomyces pombe (strain 972 / ATCC 24843) (Fission yeast)).